A 267-amino-acid polypeptide reads, in one-letter code: Probable tetrahydroxynaphthalene reductase MYCGRDRAFT_87994 (267 aa).

Positions 26, 72, 99, and 132 each coordinate NADP(+). S149 serves as the catalytic Proton donor. NADP(+) is bound by residues Y163, K167, I196, and T198. The Proton acceptor role is filled by Y163. Residue K167 is the Lowers pKa of active site Tyr of the active site.

It belongs to the short-chain dehydrogenases/reductases (SDR) family. In terms of assembly, homotetramer.

The catalysed reaction is scytalone + NADP(+) = naphthalene-1,3,6,8-tetrol + NADPH + H(+). It functions in the pathway pigment biosynthesis; melanin biosynthesis. Probable tetrahydroxynaphthalene reductase; part of the gene cluster 29 that mediates the biosynthesis dihydroxynaphthalene (DHN)-melanin, a bluish-green pigment and a structural component of the conidial wall. Catalyzes the NADPH-dependent reduction of 1,3,6,8-tetrahydroxynaphthalene (T4HN) into (+)-scytalone. The sequence is that of Probable tetrahydroxynaphthalene reductase MYCGRDRAFT_87994 from Zymoseptoria tritici (strain CBS 115943 / IPO323) (Speckled leaf blotch fungus).